The chain runs to 455 residues: GTPase Der (455 aa).

2 EngA-type G domains span residues proline 4–aspartate 169 and isoleucine 178–arginine 353. GTP contacts are provided by residues glycine 10–serine 17, aspartate 57–leucine 61, asparagine 120–glutamate 123, glycine 184–serine 191, aspartate 231–isoleucine 235, and asparagine 296–aspartate 299. In terms of domain architecture, KH-like spans arginine 354 to glutamine 439.

This sequence belongs to the TRAFAC class TrmE-Era-EngA-EngB-Septin-like GTPase superfamily. EngA (Der) GTPase family. In terms of assembly, associates with the 50S ribosomal subunit.

GTPase that plays an essential role in the late steps of ribosome biogenesis. The protein is GTPase Der of Parasynechococcus marenigrum (strain WH8102).